The following is a 490-amino-acid chain: Cobyric acid synthase (490 aa).

Positions 252–428 (ARRVAVVRLP…WHGAFEGDAL (177 aa)) constitute a GATase cobBQ-type domain. The active-site Nucleophile is Cys333. The active site involves His420.

The protein belongs to the CobB/CobQ family. CobQ subfamily.

The protein operates within cofactor biosynthesis; adenosylcobalamin biosynthesis. Catalyzes amidations at positions B, D, E, and G on adenosylcobyrinic A,C-diamide. NH(2) groups are provided by glutamine, and one molecule of ATP is hydrogenolyzed for each amidation. This is Cobyric acid synthase from Mycolicibacterium vanbaalenii (strain DSM 7251 / JCM 13017 / BCRC 16820 / KCTC 9966 / NRRL B-24157 / PYR-1) (Mycobacterium vanbaalenii).